We begin with the raw amino-acid sequence, 204 residues long: Probable proteasome subunit beta type-3 (204 aa).

It belongs to the peptidase T1B family. In terms of assembly, the 26S proteasome consists of a 20S proteasome core and two 19S regulatory subunits. The 20S proteasome core is composed of 28 subunits that are arranged in four stacked rings, resulting in a barrel-shaped structure. The two end rings are each formed by seven alpha subunits, and the two central rings are each formed by seven beta subunits. The catalytic chamber with the active sites is on the inside of the barrel.

Its subcellular location is the cytoplasm. The protein localises to the nucleus. Functionally, non-catalytic component of the proteasome, a multicatalytic proteinase complex which is characterized by its ability to cleave peptides with Arg, Phe, Tyr, Leu, and Glu adjacent to the leaving group at neutral or slightly basic pH. The proteasome has an ATP-dependent proteolytic activity. The sequence is that of Probable proteasome subunit beta type-3 (pup3) from Schizosaccharomyces pombe (strain 972 / ATCC 24843) (Fission yeast).